Consider the following 256-residue polypeptide: Calsenilin (256 aa).

A disordered region spans residues 1–22 (MQRTKEAMKASDGSLLGDPGRI). Position 14 is a phosphoserine (Ser-14). Lys-26 is covalently cross-linked (Glycyl lysine isopeptide (Lys-Gly) (interchain with G-Cter in SUMO1)). 2 S-palmitoyl cysteine lipidation sites follow: Cys-45 and Cys-46. Phosphoserine is present on residues Ser-60 and Ser-63. One can recognise an EF-hand 1; degenerate domain in the interval 67–123 (LELSTVRHQPEGLDQLQAQTKFTKKELQSLYRGFKNECPTGLVDEDTFKLIYSQFFP). Lys-90 is covalently cross-linked (Glycyl lysine isopeptide (Lys-Gly) (interchain with G-Cter in SUMO1)). 3 consecutive EF-hand domains span residues 126 to 161 (DATTYAHFLFNAFDADGNGAIHFEDFVVGLSILLRG), 162 to 197 (TVHEKLKWAFNLYDINKDGYITKEEMLAIMKSIYDM), and 210 to 245 (APLEHVERFFQKMDRNQDGVVTIDEFLETCQKDENI). Ca(2+) contacts are provided by Asp-175, Asn-177, Asp-179, Tyr-181, Glu-186, Asp-223, Asn-225, Asp-227, and Glu-234. Residues 243–256 (ENIMSSMQLFENVI) form an interaction with KCND2 region.

Belongs to the recoverin family. In terms of assembly, binds to DNA as a homomultimer. Dimerization is induced by binding to calcium. Interacts with the C-terminus of PSEN1 and PSEN2 and with PSEN2 CTF subunit. Associates with KCN1. Component of heteromultimeric potassium channels. Identified in potassium channel complexes containing KCND1, KCND2, KCND3, KCNIP1, KCNIP2, KCNIP3, KCNIP4, DPP6 and DPP10. Interacts with KCND2 and KCND3. Palmitoylated. Palmitoylation enhances association with the plasma membrane. In terms of processing, proteolytically cleaved by caspase-3. Detected in brain cortex, thalamus, dentate gyrus and cerebellum (at protein level). Expressed in brain. Colocalizes with KCND2 in excitatory neurons including cortical and hippocampal CA1 pyramidal cells.

The protein resides in the cytoplasm. It is found in the cell membrane. It localises to the endoplasmic reticulum. Its subcellular location is the golgi apparatus. The protein localises to the nucleus. Functionally, calcium-dependent transcriptional repressor that binds to the DRE element of genes including PDYN and FOS. Affinity for DNA is reduced upon binding to calcium and enhanced by binding to magnesium. Seems to be involved in nociception. In terms of biological role, regulatory subunit of Kv4/D (Shal)-type voltage-gated rapidly inactivating A-type potassium channels, such as KCND2/Kv4.2 and KCND3/Kv4.3. Modulates channel expression at the cell membrane, gating characteristics, inactivation kinetics and rate of recovery from inactivation in a calcium-dependent and isoform-specific manner. May play a role in the regulation of PSEN2 proteolytic processing and apoptosis. Together with PSEN2 involved in modulation of amyloid-beta formation. This Rattus norvegicus (Rat) protein is Calsenilin (Kcnip3).